The chain runs to 221 residues: Probable septum site-determining protein MinC (221 aa).

It belongs to the MinC family. As to quaternary structure, interacts with MinD and FtsZ.

In terms of biological role, cell division inhibitor that blocks the formation of polar Z ring septums. Rapidly oscillates between the poles of the cell to destabilize FtsZ filaments that have formed before they mature into polar Z rings. Prevents FtsZ polymerization. This is Probable septum site-determining protein MinC from Aliivibrio salmonicida (strain LFI1238) (Vibrio salmonicida (strain LFI1238)).